The sequence spans 455 residues: Hydroxymethylglutaryl-CoA synthase 2 (455 aa).

Glu-86 serves as the catalytic Proton donor/acceptor. Catalysis depends on Cys-120, which acts as the Acyl-thioester intermediate. Positions 120, 161, 211, 255, 264, 329, and 363 each coordinate (3S)-3-hydroxy-3-methylglutaryl-CoA. The Proton donor/acceptor role is filled by His-255.

This sequence belongs to the thiolase-like superfamily. HMG-CoA synthase family.

It catalyses the reaction acetoacetyl-CoA + acetyl-CoA + H2O = (3S)-3-hydroxy-3-methylglutaryl-CoA + CoA + H(+). The protein operates within metabolic intermediate biosynthesis; (R)-mevalonate biosynthesis; (R)-mevalonate from acetyl-CoA: step 2/3. Functionally, this enzyme condenses acetyl-CoA with acetoacetyl-CoA to form HMG-CoA, which is the substrate for HMG-CoA reductase. In Blattella germanica (German cockroach), this protein is Hydroxymethylglutaryl-CoA synthase 2 (HMGCS-2).